Reading from the N-terminus, the 252-residue chain is Chitooligosaccharide deacetylase (252 aa).

2 residues coordinate Mg(2+): His-61 and His-125.

The protein belongs to the YdjC deacetylase family. ChbG subfamily. As to quaternary structure, homodimer. It depends on Mg(2+) as a cofactor.

It localises to the cytoplasm. It catalyses the reaction N,N'-diacetylchitobiose + H2O = N-acetyl-beta-D-glucosaminyl-(1-&gt;4)-D-glucosamine + acetate. The catalysed reaction is diacetylchitobiose-6'-phosphate + H2O = N'-monoacetylchitobiose-6'-phosphate + acetate. Its pathway is glycan degradation; chitin degradation. In terms of biological role, involved in the degradation of chitin. ChbG is essential for growth on the acetylated chitooligosaccharides chitobiose and chitotriose but is dispensable for growth on cellobiose and chitosan dimer, the deacetylated form of chitobiose. Deacetylation of chitobiose-6-P and chitotriose-6-P is necessary for both the activation of the chb promoter by the regulatory protein ChbR and the hydrolysis of phosphorylated beta-glucosides by the phospho-beta-glucosidase ChbF. Catalyzes the removal of only one acetyl group from chitobiose-6-P to yield monoacetylchitobiose-6-P, the inducer of ChbR and the substrate of ChbF. This is Chitooligosaccharide deacetylase from Escherichia fergusonii (strain ATCC 35469 / DSM 13698 / CCUG 18766 / IAM 14443 / JCM 21226 / LMG 7866 / NBRC 102419 / NCTC 12128 / CDC 0568-73).